The primary structure comprises 141 residues: Small ribosomal subunit protein eS17z (141 aa).

This sequence belongs to the eukaryotic ribosomal protein eS17 family.

This Arabidopsis thaliana (Mouse-ear cress) protein is Small ribosomal subunit protein eS17z (RPS17A).